The primary structure comprises 96 residues: Putative septation protein SpoVG (96 aa).

This sequence belongs to the SpoVG family.

Functionally, could be involved in septation. This Oceanobacillus iheyensis (strain DSM 14371 / CIP 107618 / JCM 11309 / KCTC 3954 / HTE831) protein is Putative septation protein SpoVG.